A 406-amino-acid polypeptide reads, in one-letter code: Putative colanic acid biosynthesis glycosyltransferase WcaL (406 aa).

This sequence belongs to the glycosyltransferase group 1 family. Glycosyltransferase 4 subfamily.

It participates in slime biogenesis; slime polysaccharide biosynthesis. This chain is Putative colanic acid biosynthesis glycosyltransferase WcaL (wcaL), found in Escherichia coli (strain K12).